An 843-amino-acid polypeptide reads, in one-letter code: Elongation factor 2 (843 aa).

The tr-type G domain maps to His-17–Ala-253. Position 26 to 33 (Ala-26 to Ser-33) interacts with GTP. Residues Thr-57 and Thr-59 each carry the phosphothreonine modification. Asn-158–Asp-161 contributes to the GTP binding site. Diphthamide is present on His-700.

The protein belongs to the TRAFAC class translation factor GTPase superfamily. Classic translation factor GTPase family. EF-G/EF-2 subfamily. In terms of processing, phosphorylation by EF-2 kinase completely inactivates EF-2.

Its subcellular location is the cytoplasm. The enzyme catalyses GTP + H2O = GDP + phosphate + H(+). Functionally, catalyzes the GTP-dependent ribosomal translocation step during translation elongation. During this step, the ribosome changes from the pre-translocational (PRE) to the post-translocational (POST) state as the newly formed A-site-bound peptidyl-tRNA and P-site-bound deacylated tRNA move to the P and E sites, respectively. Catalyzes the coordinated movement of the two tRNA molecules, the mRNA and conformational changes in the ribosome. The sequence is that of Elongation factor 2 from Beta vulgaris (Sugar beet).